Reading from the N-terminus, the 705-residue chain is Endoglucanase (705 aa).

A signal peptide spans 1 to 23 (MKILKNCILLIIFGLLSTQLINA). Asn-75 carries N-linked (GlcNAc...) asparagine glycosylation. The Nucleophile role is filled by Asp-85. Catalysis depends on residues His-390, Asp-428, and Glu-437. Positions 455 to 556 (NPSSTSVPTT…TPTETPSSGE (102 aa)) are disordered. The span at 462–552 (PTTTPTVTET…TPTVTPTETP (91 aa)) shows a compositional bias: low complexity. The pro/Thr repeats ('hinge') (Pro/Thr box) stretch occupies residues 463 to 552 (TTTPTVTETP…TPTVTPTETP (90 aa)).

Belongs to the glycosyl hydrolase 9 (cellulase E) family.

It catalyses the reaction Endohydrolysis of (1-&gt;4)-beta-D-glucosidic linkages in cellulose, lichenin and cereal beta-D-glucans.. May digest the spore cell wall during germination, to release the enclosed amoeba. The sequence is that of Endoglucanase (celA) from Dictyostelium discoideum (Social amoeba).